A 435-amino-acid polypeptide reads, in one-letter code: AP-2 complex subunit mu (435 aa).

A Phosphoserine modification is found at Ser-45. A Phosphothreonine modification is found at Thr-156. The 265-residue stretch at 170-434 folds into the MHD domain; sequence RNELFLDVLE…IGRSGIYETR (265 aa). Lys-341, Lys-345, and Lys-354 together coordinate a 1,2-diacyl-sn-glycero-3-phospho-(1D-myo-inositol-3,4,5-trisphosphate).

It belongs to the adaptor complexes medium subunit family. Adaptor protein complex 2 (AP-2) is a heterotetramer composed of two large adaptins (alpha-type subunit AP2A1 or AP2A2 and beta-type subunit AP2B1), a medium adaptin (mu-type subunit AP2M1) and a small adaptin (sigma-type subunit AP2S1). Interacts with ATP6V1H and MEGF10. Interacts with EGFR and TTGN1. Interacts with F2R. Interacts with PIP5K1C; tyrosine phosphorylation of PIP5K1C weakens the interaction. Interacts with KIAA0319; required for clathrin-mediated endocytosis of KIAA0319. Interacts with DVL2 (via DEP domain). Interacts with KCNQ1; mediates estrogen-induced internalization via clathrin-coated vesicles. Interacts with P2RX4 (via internalization motif). Together with AP2A1 or AP2A2 and AP2B1, it interacts with ADAM10; this interaction facilitates ADAM10 endocytosis from the plasma membrane during long-term potentiation in hippocampal neurons. Probably interacts with ACE2 (via endocytic sorting signal motif); the interaction is inhibited by ACE2 phosphorylation. Interacts with RALBP1; the interaction is direct. Interacts with TMEM106B (via N-terminus). In terms of processing, phosphorylation at Thr-156 increases the affinity of the AP-2 complex for cargo membrane proteins during the initial stages of endocytosis.

The protein resides in the cell membrane. It localises to the membrane. Its subcellular location is the coated pit. Functionally, component of the adaptor protein complex 2 (AP-2). Adaptor protein complexes function in protein transport via transport vesicles in different membrane traffic pathways. Adaptor protein complexes are vesicle coat components and appear to be involved in cargo selection and vesicle formation. AP-2 is involved in clathrin-dependent endocytosis in which cargo proteins are incorporated into vesicles surrounded by clathrin (clathrin-coated vesicles, CCVs) which are destined for fusion with the early endosome. The clathrin lattice serves as a mechanical scaffold but is itself unable to bind directly to membrane components. Clathrin-associated adaptor protein (AP) complexes which can bind directly to both the clathrin lattice and to the lipid and protein components of membranes are considered to be the major clathrin adaptors contributing the CCV formation. AP-2 also serves as a cargo receptor to selectively sort the membrane proteins involved in receptor-mediated endocytosis. AP-2 seems to play a role in the recycling of synaptic vesicle membranes from the presynaptic surface. AP-2 recognizes Y-X-X-[FILMV] (Y-X-X-Phi) and [ED]-X-X-X-L-[LI] endocytosis signal motifs within the cytosolic tails of transmembrane cargo molecules. AP-2 may also play a role in maintaining normal post-endocytic trafficking through the ARF6-regulated, non-clathrin pathway. During long-term potentiation in hippocampal neurons, AP-2 is responsible for the endocytosis of ADAM10. The AP-2 mu subunit binds to transmembrane cargo proteins; it recognizes the Y-X-X-Phi motifs. The surface region interacting with to the Y-X-X-Phi motif is inaccessible in cytosolic AP-2, but becomes accessible through a conformational change following phosphorylation of AP-2 mu subunit at Thr-156 in membrane-associated AP-2. The membrane-specific phosphorylation event appears to involve assembled clathrin which activates the AP-2 mu kinase AAK1. Plays a role in endocytosis of frizzled family members upon Wnt signaling. This chain is AP-2 complex subunit mu (AP2M1), found in Bos taurus (Bovine).